Reading from the N-terminus, the 494-residue chain is Aspartyl/glutamyl-tRNA(Asn/Gln) amidotransferase subunit B (494 aa).

This sequence belongs to the GatB/GatE family. GatB subfamily. As to quaternary structure, heterotrimer of A, B and C subunits.

It catalyses the reaction L-glutamyl-tRNA(Gln) + L-glutamine + ATP + H2O = L-glutaminyl-tRNA(Gln) + L-glutamate + ADP + phosphate + H(+). The enzyme catalyses L-aspartyl-tRNA(Asn) + L-glutamine + ATP + H2O = L-asparaginyl-tRNA(Asn) + L-glutamate + ADP + phosphate + 2 H(+). Functionally, allows the formation of correctly charged Asn-tRNA(Asn) or Gln-tRNA(Gln) through the transamidation of misacylated Asp-tRNA(Asn) or Glu-tRNA(Gln) in organisms which lack either or both of asparaginyl-tRNA or glutaminyl-tRNA synthetases. The reaction takes place in the presence of glutamine and ATP through an activated phospho-Asp-tRNA(Asn) or phospho-Glu-tRNA(Gln). This chain is Aspartyl/glutamyl-tRNA(Asn/Gln) amidotransferase subunit B, found in Rhizorhabdus wittichii (strain DSM 6014 / CCUG 31198 / JCM 15750 / NBRC 105917 / EY 4224 / RW1) (Sphingomonas wittichii).